We begin with the raw amino-acid sequence, 610 residues long: UvrABC system protein C (610 aa).

The GIY-YIG domain maps to 16 to 94; it reads SQPGVYRMYD…IKLYQPRYNV (79 aa). A UVR domain is found at 204 to 239; the sequence is DQVLTQLIARMEKASQDLAFEEAARIRDQIQAVRRV.

This sequence belongs to the UvrC family. In terms of assembly, interacts with UvrB in an incision complex.

Its subcellular location is the cytoplasm. The UvrABC repair system catalyzes the recognition and processing of DNA lesions. UvrC both incises the 5' and 3' sides of the lesion. The N-terminal half is responsible for the 3' incision and the C-terminal half is responsible for the 5' incision. This Salmonella paratyphi B (strain ATCC BAA-1250 / SPB7) protein is UvrABC system protein C.